The primary structure comprises 289 residues: Cell division protein ZipA (289 aa).

Residue Met-1 is a topological domain, periplasmic. The helical transmembrane segment at Glu-2–Phe-22 threads the bilayer. Residues Asp-23–Gly-289 lie on the Cytoplasmic side of the membrane. A disordered region spans residues Asp-48–Lys-141. 3 stretches are compositionally biased toward basic and acidic residues: residues Leu-64–Leu-77, Arg-85–Pro-106, and Gly-123–Lys-141.

It belongs to the ZipA family. In terms of assembly, interacts with FtsZ via their C-terminal domains.

It localises to the cell inner membrane. In terms of biological role, essential cell division protein that stabilizes the FtsZ protofilaments by cross-linking them and that serves as a cytoplasmic membrane anchor for the Z ring. Also required for the recruitment to the septal ring of downstream cell division proteins. The sequence is that of Cell division protein ZipA from Pseudomonas savastanoi pv. phaseolicola (strain 1448A / Race 6) (Pseudomonas syringae pv. phaseolicola (strain 1448A / Race 6)).